The primary structure comprises 313 residues: 4-hydroxy-3-methylbut-2-enyl diphosphate reductase (313 aa).

C12 contributes to the [4Fe-4S] cluster binding site. (2E)-4-hydroxy-3-methylbut-2-enyl diphosphate-binding residues include H41 and H74. H41 and H74 together coordinate dimethylallyl diphosphate. H41 and H74 together coordinate isopentenyl diphosphate. C96 provides a ligand contact to [4Fe-4S] cluster. H124 lines the (2E)-4-hydroxy-3-methylbut-2-enyl diphosphate pocket. H124 is a binding site for dimethylallyl diphosphate. H124 contributes to the isopentenyl diphosphate binding site. The active-site Proton donor is the E126. T167 is a binding site for (2E)-4-hydroxy-3-methylbut-2-enyl diphosphate. C197 contributes to the [4Fe-4S] cluster binding site. Positions 225, 226, 227, and 269 each coordinate (2E)-4-hydroxy-3-methylbut-2-enyl diphosphate. S225, S226, N227, and S269 together coordinate dimethylallyl diphosphate. Isopentenyl diphosphate contacts are provided by S225, S226, N227, and S269.

This sequence belongs to the IspH family. [4Fe-4S] cluster serves as cofactor.

It catalyses the reaction isopentenyl diphosphate + 2 oxidized [2Fe-2S]-[ferredoxin] + H2O = (2E)-4-hydroxy-3-methylbut-2-enyl diphosphate + 2 reduced [2Fe-2S]-[ferredoxin] + 2 H(+). It carries out the reaction dimethylallyl diphosphate + 2 oxidized [2Fe-2S]-[ferredoxin] + H2O = (2E)-4-hydroxy-3-methylbut-2-enyl diphosphate + 2 reduced [2Fe-2S]-[ferredoxin] + 2 H(+). It functions in the pathway isoprenoid biosynthesis; dimethylallyl diphosphate biosynthesis; dimethylallyl diphosphate from (2E)-4-hydroxy-3-methylbutenyl diphosphate: step 1/1. Its pathway is isoprenoid biosynthesis; isopentenyl diphosphate biosynthesis via DXP pathway; isopentenyl diphosphate from 1-deoxy-D-xylulose 5-phosphate: step 6/6. Catalyzes the conversion of 1-hydroxy-2-methyl-2-(E)-butenyl 4-diphosphate (HMBPP) into a mixture of isopentenyl diphosphate (IPP) and dimethylallyl diphosphate (DMAPP). Acts in the terminal step of the DOXP/MEP pathway for isoprenoid precursor biosynthesis. The chain is 4-hydroxy-3-methylbut-2-enyl diphosphate reductase from Baumannia cicadellinicola subsp. Homalodisca coagulata.